Consider the following 272-residue polypeptide: 3-methyl-2-oxobutanoate hydroxymethyltransferase (272 aa).

Mg(2+) is bound by residues aspartate 43 and aspartate 82. 3-methyl-2-oxobutanoate contacts are provided by residues aspartate 43 to serine 44, aspartate 82, and lysine 112. Position 114 (glutamate 114) interacts with Mg(2+). The active-site Proton acceptor is the glutamate 179.

This sequence belongs to the PanB family. In terms of assembly, homodecamer; pentamer of dimers. The cofactor is Mg(2+).

The protein localises to the cytoplasm. It carries out the reaction 3-methyl-2-oxobutanoate + (6R)-5,10-methylene-5,6,7,8-tetrahydrofolate + H2O = 2-dehydropantoate + (6S)-5,6,7,8-tetrahydrofolate. It functions in the pathway cofactor biosynthesis; (R)-pantothenate biosynthesis; (R)-pantoate from 3-methyl-2-oxobutanoate: step 1/2. Catalyzes the reversible reaction in which hydroxymethyl group from 5,10-methylenetetrahydrofolate is transferred onto alpha-ketoisovalerate to form ketopantoate. The chain is 3-methyl-2-oxobutanoate hydroxymethyltransferase from Staphylococcus aureus (strain JH1).